A 485-amino-acid polypeptide reads, in one-letter code: MPVLKKRKLAHTAQPDPIVSDLESSSSEASQQSHDEQLTAANEQDDESPQVQREEAVTKSFKDLGIIDSLCEACEALGYKSPTPIQAESIPLALQGRDLIGLAETGSGKTAAFALPILQALMNKPQSLFGLILAPTRELACQISEAFEALGSLISVRCAVIVGGMDMVSQAISLGKKPHIIVATPGRLLDHLENTKGFSLRSLKYLVMDEADRLLDLDFGPILDKILKVLPRERRTYLFSATMSSKVESLQRASLSNPLRVSISSNKYQTVATLLQSYLFIPHKYKDIYLVYLLNEYAGQSAIVFTRTVNETQRLAILLRALGFGSIPLHGQLSQSSRLGALSKFRSRSRDILVATDVAARGLDIPSVDVVLNFDLPSDSKTYIHRVGRTARAGKSGHAFSIVTQYDIEVWLRIENALGKKLDEYKVEKEEVMVLSDRVGEAQRHAITEMKDLHEKRGSRGATLKGRRPAKGAKRGRDEMDREEG.

Residues 1–10 (MPVLKKRKLA) are compositionally biased toward basic residues. Positions 1-55 (MPVLKKRKLAHTAQPDPIVSDLESSSSEASQQSHDEQLTAANEQDDESPQVQREE) are disordered. A compositionally biased stretch (low complexity) spans 20–32 (SDLESSSSEASQQ). The Q motif motif lies at 59–87 (KSFKDLGIIDSLCEACEALGYKSPTPIQA). In terms of domain architecture, Helicase ATP-binding spans 90-261 (IPLALQGRDL…RASLSNPLRV (172 aa)). 103-110 (AETGSGKT) is a binding site for ATP. A DEAD box motif is present at residues 209–212 (DEAD). The region spanning 285–433 (YKDIYLVYLL…EYKVEKEEVM (149 aa)) is the Helicase C-terminal domain. Over residues 449 to 458 (EMKDLHEKRG) the composition is skewed to basic and acidic residues. A disordered region spans residues 449–485 (EMKDLHEKRGSRGATLKGRRPAKGAKRGRDEMDREEG). Over residues 465–474 (KGRRPAKGAK) the composition is skewed to basic residues. Over residues 475–485 (RGRDEMDREEG) the composition is skewed to basic and acidic residues.

It belongs to the DEAD box helicase family. DDX47/RRP3 subfamily. Interacts with the SSU processome.

The protein resides in the nucleus. The enzyme catalyses ATP + H2O = ADP + phosphate + H(+). In terms of biological role, ATP-dependent rRNA helicase required for pre-ribosomal RNA processing. Involved in the maturation of the 35S-pre-rRNA and to its cleavage to mature 18S rRNA. This Ajellomyces capsulatus (strain NAm1 / WU24) (Darling's disease fungus) protein is ATP-dependent rRNA helicase RRP3.